The primary structure comprises 142 residues: Large ribosomal subunit protein uL13 (142 aa).

This sequence belongs to the universal ribosomal protein uL13 family. In terms of assembly, part of the 50S ribosomal subunit.

Functionally, this protein is one of the early assembly proteins of the 50S ribosomal subunit, although it is not seen to bind rRNA by itself. It is important during the early stages of 50S assembly. The chain is Large ribosomal subunit protein uL13 from Shewanella amazonensis (strain ATCC BAA-1098 / SB2B).